The primary structure comprises 36 residues: Mu-agatoxin-Aa1a (36 aa).

4 disulfide bridges follow: cysteine 2-cysteine 17, cysteine 9-cysteine 22, cysteine 16-cysteine 32, and cysteine 24-cysteine 30. Asparagine 36 bears the Asparagine amide mark.

The protein belongs to the neurotoxin 07 (Beta/delta-agtx) family. 04 (aga-5) subfamily. Expressed by the venom gland.

The protein resides in the secreted. Insecticidal neurotoxin that induces an irreversible spastic paralysis when injected into insects. Modifies presynaptic voltage-gated sodium channels (Nav), causing them to open at the normal resting potential of the nerve. This leads to spontaneous release of neurotransmitter and repetitive action potentials in motor neurons. This is Mu-agatoxin-Aa1a from Agelenopsis aperta (North American funnel-web spider).